The chain runs to 163 residues: uncharacterized protein (163 aa).

The segment at 23 to 113 is disordered; that stretch reads DFPEEPPLWV…QVADGVHSQQ (91 aa). Residue S102 is modified to Phosphoserine.

This is an uncharacterized protein from Mus musculus (Mouse).